The primary structure comprises 104 residues: Co-chaperonin GroES 3 (104 aa).

Belongs to the GroES chaperonin family. As to quaternary structure, heptamer of 7 subunits arranged in a ring. Interacts with the chaperonin GroEL.

It is found in the cytoplasm. Its function is as follows. Together with the chaperonin GroEL, plays an essential role in assisting protein folding. The GroEL-GroES system forms a nano-cage that allows encapsulation of the non-native substrate proteins and provides a physical environment optimized to promote and accelerate protein folding. GroES binds to the apical surface of the GroEL ring, thereby capping the opening of the GroEL channel. The protein is Co-chaperonin GroES 3 of Bradyrhizobium diazoefficiens (strain JCM 10833 / BCRC 13528 / IAM 13628 / NBRC 14792 / USDA 110).